A 213-amino-acid polypeptide reads, in one-letter code: Chloramphenicol acetyltransferase 2 (213 aa).

His189 (proton acceptor) is an active-site residue.

The protein belongs to the chloramphenicol acetyltransferase family. Homotrimer.

The enzyme catalyses chloramphenicol + acetyl-CoA = chloramphenicol 3-acetate + CoA. Its function is as follows. This enzyme is an effector of chloramphenicol resistance in bacteria. In Haemophilus influenzae, this protein is Chloramphenicol acetyltransferase 2 (cat-IIH).